A 614-amino-acid chain; its full sequence is Phosphomethylpyrimidine synthase (614 aa).

Residues N230, M259, Y288, H324, 344–346, 385–388, and E424 contribute to the substrate site; these read SRG and DGLR. Residue H428 coordinates Zn(2+). Y451 lines the substrate pocket. H492 is a Zn(2+) binding site. [4Fe-4S] cluster is bound by residues C572, C575, and C580.

The protein belongs to the ThiC family. Homodimer. [4Fe-4S] cluster is required as a cofactor.

It carries out the reaction 5-amino-1-(5-phospho-beta-D-ribosyl)imidazole + S-adenosyl-L-methionine = 4-amino-2-methyl-5-(phosphooxymethyl)pyrimidine + CO + 5'-deoxyadenosine + formate + L-methionine + 3 H(+). It functions in the pathway cofactor biosynthesis; thiamine diphosphate biosynthesis. Functionally, catalyzes the synthesis of the hydroxymethylpyrimidine phosphate (HMP-P) moiety of thiamine from aminoimidazole ribotide (AIR) in a radical S-adenosyl-L-methionine (SAM)-dependent reaction. The polypeptide is Phosphomethylpyrimidine synthase (Stenotrophomonas maltophilia (strain K279a)).